Here is a 464-residue protein sequence, read N- to C-terminus: Cell division protein FtsA (464 aa).

Positions Glu-392–Glu-464 are disordered. The segment covering Lys-416–Phe-455 has biased composition (basic and acidic residues).

It belongs to the FtsA/MreB family. As to quaternary structure, self-interacts. Interacts with FtsZ.

Its subcellular location is the cell membrane. In terms of biological role, cell division protein that is involved in the assembly of the Z ring. May serve as a membrane anchor for the Z ring. This is Cell division protein FtsA from Staphylococcus epidermidis (strain ATCC 12228 / FDA PCI 1200).